Here is a 284-residue protein sequence, read N- to C-terminus: 4-diphosphocytidyl-2-C-methyl-D-erythritol kinase (284 aa).

K14 is an active-site residue. 97-107 serves as a coordination point for ATP; sequence PMGGGVGGGSS. D139 is an active-site residue.

Belongs to the GHMP kinase family. IspE subfamily.

The catalysed reaction is 4-CDP-2-C-methyl-D-erythritol + ATP = 4-CDP-2-C-methyl-D-erythritol 2-phosphate + ADP + H(+). Its pathway is isoprenoid biosynthesis; isopentenyl diphosphate biosynthesis via DXP pathway; isopentenyl diphosphate from 1-deoxy-D-xylulose 5-phosphate: step 3/6. Catalyzes the phosphorylation of the position 2 hydroxy group of 4-diphosphocytidyl-2C-methyl-D-erythritol. This is 4-diphosphocytidyl-2-C-methyl-D-erythritol kinase from Pseudoalteromonas translucida (strain TAC 125).